The sequence spans 61 residues: Metallothionein (61 aa).

Methionine 1 bears the N-acetylmethionine mark. Residues methionine 1–cysteine 29 are beta. A divalent metal cation contacts are provided by cysteine 5, cysteine 7, cysteine 13, cysteine 15, cysteine 19, cysteine 21, cysteine 24, cysteine 26, cysteine 29, cysteine 33, cysteine 34, cysteine 36, cysteine 37, cysteine 41, cysteine 44, cysteine 48, cysteine 50, cysteine 57, cysteine 59, and cysteine 60. Positions lysine 30 to alanine 61 are alpha.

It belongs to the metallothionein superfamily. Type 1 family. As to quaternary structure, monomer.

Functionally, metallothioneins have a high content of cysteine residues that bind various heavy metals. The sequence is that of Metallothionein from Balaena mysticetus (Bowhead whale).